The primary structure comprises 231 residues: Octanoyltransferase (231 aa).

Residues 49-231 (SEAAEQVWLL…KRTFSEVFGS (183 aa)) form the BPL/LPL catalytic domain. Substrate contacts are provided by residues 87 to 94 (RGGQITYH), 162 to 164 (AIG), and 175 to 177 (GVS). The active-site Acyl-thioester intermediate is the Cys193.

It belongs to the LipB family.

Its subcellular location is the cytoplasm. The enzyme catalyses octanoyl-[ACP] + L-lysyl-[protein] = N(6)-octanoyl-L-lysyl-[protein] + holo-[ACP] + H(+). Its pathway is protein modification; protein lipoylation via endogenous pathway; protein N(6)-(lipoyl)lysine from octanoyl-[acyl-carrier-protein]: step 1/2. Functionally, catalyzes the transfer of endogenously produced octanoic acid from octanoyl-acyl-carrier-protein onto the lipoyl domains of lipoate-dependent enzymes. Lipoyl-ACP can also act as a substrate although octanoyl-ACP is likely to be the physiological substrate. The chain is Octanoyltransferase from Nitrobacter winogradskyi (strain ATCC 25391 / DSM 10237 / CIP 104748 / NCIMB 11846 / Nb-255).